The sequence spans 370 residues: Succinoglycan biosynthesis protein ExoH (370 aa).

10 helical membrane passes run 14-34, 46-66, 88-108, 144-164, 170-190, 193-213, 216-236, 244-264, 282-302, and 307-327; these read ILLI…WSPF, VFLG…ISGY, TVLL…YAIQ, LYFL…ALLV, VTLL…IFLK, ILFG…IKML, FAAP…VGLY, LWLD…SWAI, GLSF…WMIW, and LSYY…ILVA. The interval 350 to 370 is disordered; the sequence is AKRMATQPPQGAQAGYSPQQR.

This sequence belongs to the acyltransferase 3 family.

Its subcellular location is the cell membrane. It participates in glycan metabolism; exopolysaccharide biosynthesis. Its function is as follows. Required for the succinyl modification of the seventh sugar (glucose) of the octasaccharide subunit of succinoglycan (EPS I). The chain is Succinoglycan biosynthesis protein ExoH (exoH) from Rhizobium meliloti (strain 1021) (Ensifer meliloti).